The following is a 358-amino-acid chain: Methionine import ATP-binding protein MetN (358 aa).

The ABC transporter domain occupies 2–247; it reads ITTTGLTKVY…PGSELAHELF (246 aa). 38-45 contributes to the ATP binding site; it reads GQSGAGKS.

The protein belongs to the ABC transporter superfamily. Methionine importer (TC 3.A.1.24) family. As to quaternary structure, the complex is composed of two ATP-binding proteins (MetN), two transmembrane proteins (MetI) and a solute-binding protein (MetQ).

It is found in the cell membrane. It catalyses the reaction L-methionine(out) + ATP + H2O = L-methionine(in) + ADP + phosphate + H(+). It carries out the reaction D-methionine(out) + ATP + H2O = D-methionine(in) + ADP + phosphate + H(+). In terms of biological role, part of the ABC transporter complex MetNIQ involved in methionine import. Responsible for energy coupling to the transport system. This chain is Methionine import ATP-binding protein MetN, found in Streptomyces griseus.